Consider the following 206-residue polypeptide: Platelet glycoprotein Ib beta chain (206 aa).

A signal peptide spans 1–25 (MGSGPRGALSLLLLLLAPPSRPAAG). Cystine bridges form between Cys-26–Cys-32 and Cys-30–Cys-39. The LRRNT domain occupies 27-55 (PAPCSCAGTLVDCGRRGLTWASLPTAFPV). Topologically, residues 27–147 (PAPCSCAGTL…RAACAPGPLC (121 aa)) are extracellular. The stretch at 60 to 83 (LVLTGNNLTALPPGLLDALPALRT) is one LRR repeat. A glycan (N-linked (GlcNAc...) asparagine) is linked at Asn-66. The LRRCT domain occupies 89–143 (NPWRCDCRLVPLRAWLAGRPERAPYRDLRCVAPPALRGRLLPYLAEDELRAACAP). Cystine bridges form between Cys-93–Cys-118 and Cys-95–Cys-141. The chain crosses the membrane as a helical span at residues 148-172 (WGALAAQLALLGLGLLHALLLVLLL). Topologically, residues 173–206 (CRLRRLRARARARAAARLSLTDPLVAERAGTDES) are cytoplasmic. The residue at position 191 (Ser-191) is a Phosphoserine; by PKA. Thr-193 carries the post-translational modification Phosphothreonine.

Two GP-Ib beta are disulfide-linked to one GP-Ib alpha. GP-IX is complexed with the GP-Ib heterodimer via a non covalent linkage. Interacts with TRAF4. Expressed in heart and brain.

It is found in the membrane. In terms of biological role, gp-Ib, a surface membrane protein of platelets, participates in the formation of platelet plugs by binding to von Willebrand factor, which is already bound to the subendothelium. This Homo sapiens (Human) protein is Platelet glycoprotein Ib beta chain (GP1BB).